Consider the following 603-residue polypeptide: Penicillin-binding protein activator LpoA (603 aa).

Residues 1–24 (MINHKRLSVPRILTPVALAITLAA) form the signal peptide. Cysteine 25 is lipidated: N-palmitoyl cysteine. Cysteine 25 is lipidated: S-diacylglycerol cysteine.

The protein belongs to the LpoA family. Interacts with PBP1a.

It is found in the cell outer membrane. Its function is as follows. Regulator of peptidoglycan synthesis that is essential for the function of penicillin-binding protein 1A (PBP1a). The polypeptide is Penicillin-binding protein activator LpoA (Vibrio antiquarius (strain Ex25)).